We begin with the raw amino-acid sequence, 335 residues long: Phospho-N-acetylmuramoyl-pentapeptide-transferase (335 aa).

The next 10 membrane-spanning stretches (helical) occupy residues 5–25, 50–70, 78–98, 114–133, 145–165, 177–197, 200–220, 236–256, 262–282, and 311–331; these read IFLAAALALMITLILGPLMIP, TPTMGGIIFLVGIVVSALIMA, MVMVISAMLGYGLIGFIDDFI, LIGQIALALLLTWGANRYLG, IHLELGLFYYPFVSFIIVGIT, LAAGTTLFSMLSYVSIATLAA, GGGVAILAYESDLAVFAAAAV, VFMGDTGSLALGGALVGLAVL, ILLIIGGVYVVEAISVILQVF, and VVMVFWLASLLCGVLGVIAYM.

Belongs to the glycosyltransferase 4 family. MraY subfamily. Mg(2+) serves as cofactor.

The protein resides in the cell membrane. The enzyme catalyses UDP-N-acetyl-alpha-D-muramoyl-L-alanyl-gamma-D-glutamyl-meso-2,6-diaminopimeloyl-D-alanyl-D-alanine + di-trans,octa-cis-undecaprenyl phosphate = di-trans,octa-cis-undecaprenyl diphospho-N-acetyl-alpha-D-muramoyl-L-alanyl-D-glutamyl-meso-2,6-diaminopimeloyl-D-alanyl-D-alanine + UMP. Its pathway is cell wall biogenesis; peptidoglycan biosynthesis. Functionally, catalyzes the initial step of the lipid cycle reactions in the biosynthesis of the cell wall peptidoglycan: transfers peptidoglycan precursor phospho-MurNAc-pentapeptide from UDP-MurNAc-pentapeptide onto the lipid carrier undecaprenyl phosphate, yielding undecaprenyl-pyrophosphoryl-MurNAc-pentapeptide, known as lipid I. This chain is Phospho-N-acetylmuramoyl-pentapeptide-transferase, found in Desulfitobacterium hafniense (strain DSM 10664 / DCB-2).